The primary structure comprises 160 residues: Cytochrome b6-f complex subunit 4 (160 aa).

The next 3 membrane-spanning stretches (helical) occupy residues 36–56 (LLYI…GLAV), 95–115 (LLGV…PFLE), and 131–151 (TVFL…TLPI).

Belongs to the cytochrome b family. PetD subfamily. In terms of assembly, the 4 large subunits of the cytochrome b6-f complex are cytochrome b6, subunit IV (17 kDa polypeptide, petD), cytochrome f and the Rieske protein, while the 4 small subunits are petG, petL, petM and petN. The complex functions as a dimer.

The protein localises to the plastid. Its subcellular location is the chloroplast thylakoid membrane. Component of the cytochrome b6-f complex, which mediates electron transfer between photosystem II (PSII) and photosystem I (PSI), cyclic electron flow around PSI, and state transitions. This chain is Cytochrome b6-f complex subunit 4, found in Pisum sativum (Garden pea).